Here is a 234-residue protein sequence, read N- to C-terminus: Proteasome subunit alpha type-6 (234 aa).

S14 is modified (phosphoserine). A Glycyl lysine isopeptide (Lys-Gly) (interchain with G-Cter in ubiquitin) cross-link involves residue K191.

This sequence belongs to the peptidase T1A family. As to quaternary structure, the 26S proteasome consists of a 20S proteasome core and two 19S regulatory subunits. The 20S proteasome core is composed of 28 subunits that are arranged in four stacked rings, resulting in a barrel-shaped structure. The two end rings are each formed by seven alpha subunits, and the two central rings are each formed by seven beta subunits. The catalytic chamber with the active sites is on the inside of the barrel.

It is found in the cytoplasm. The protein localises to the nucleus. Its function is as follows. The proteasome degrades poly-ubiquitinated proteins in the cytoplasm and in the nucleus. It is essential for the regulated turnover of proteins and for the removal of misfolded proteins. The proteasome is a multicatalytic proteinase complex that is characterized by its ability to cleave peptides with Arg, Phe, Tyr, Leu, and Glu adjacent to the leaving group at neutral or slightly basic pH. It has an ATP-dependent proteolytic activity. This is Proteasome subunit alpha type-6 (PRE5) from Saccharomyces cerevisiae (strain ATCC 204508 / S288c) (Baker's yeast).